A 437-amino-acid chain; its full sequence is Branched-chain amino acid transport system 3 carrier protein (437 aa).

12 helical membrane-spanning segments follow: residues 9–29 (ILAL…IIFP), 40–60 (VWLA…ITVI), 79–99 (YAGG…FAIP), 120–140 (ALFV…LYPG), 155–175 (ILAL…PIGT), 189–209 (FVNG…IVIV), 226–246 (YAIV…VSLF), 277–297 (LGSS…AVGL), 316–336 (LVII…TKLI), 342–362 (VLTA…CIGL), 369–389 (ILAP…LKAA), and 399–419 (LLHL…VATL).

The protein belongs to the branched chain amino acid transporter family.

The protein resides in the cell inner membrane. In terms of biological role, component of the LIV-III transport system for branched-chain amino acids. BraZ is specific for isoleucine and valine. The LIV-III transport system may be H(+)-coupled. The protein is Branched-chain amino acid transport system 3 carrier protein (braZ) of Pseudomonas aeruginosa (strain ATCC 15692 / DSM 22644 / CIP 104116 / JCM 14847 / LMG 12228 / 1C / PRS 101 / PAO1).